The primary structure comprises 334 residues: D-fructose 1,6-bisphosphatase class 2/sedoheptulose 1,7-bisphosphatase (334 aa).

4 residues coordinate Mn(2+): D33, E57, D85, and E88. Substrate-binding positions include E88 to T90, Y119, R164 to R166, and D186 to D188. Residue E213 participates in Mn(2+) binding.

The protein belongs to the FBPase class 2 family. As to quaternary structure, homotetramer. Requires Mn(2+) as cofactor.

It catalyses the reaction beta-D-fructose 1,6-bisphosphate + H2O = beta-D-fructose 6-phosphate + phosphate. The enzyme catalyses D-sedoheptulose 1,7-bisphosphate + H2O = D-sedoheptulose 7-phosphate + phosphate. It functions in the pathway carbohydrate biosynthesis; Calvin cycle. Functionally, catalyzes the hydrolysis of fructose 1,6-bisphosphate (Fru 1,6-P2) and sedoheptulose 1,7-bisphosphate (Sed 1,7-P2) to fructose 6-phosphate and sedoheptulose 7-phosphate, respectively. The sequence is that of D-fructose 1,6-bisphosphatase class 2/sedoheptulose 1,7-bisphosphatase from Parasynechococcus marenigrum (strain WH8102).